The primary structure comprises 511 residues: Acidic amino acid decarboxylase GADL1 (511 aa).

K323 is modified (N6-(pyridoxal phosphate)lysine).

This sequence belongs to the group II decarboxylase family. In terms of assembly, homodimer. It depends on pyridoxal 5'-phosphate as a cofactor.

It catalyses the reaction L-aspartate + H(+) = beta-alanine + CO2. The enzyme catalyses 3-sulfino-L-alanine + H(+) = hypotaurine + CO2. Functionally, catalyzes the decarboxylation of L-aspartate, 3-sulfino-L-alanine (cysteine sulfinic acid), and L-cysteate to beta-alanine, hypotaurine and taurine, respectively. The preferred substrate is L-aspartate. Does not exhibit any decarboxylation activity toward glutamate. The protein is Acidic amino acid decarboxylase GADL1 (gadl1) of Xenopus tropicalis (Western clawed frog).